The primary structure comprises 276 residues: Putative pyruvate, phosphate dikinase regulatory protein (276 aa).

150–157 serves as a coordination point for ADP; that stretch reads GVSRTSKT.

Belongs to the pyruvate, phosphate/water dikinase regulatory protein family. PDRP subfamily.

It carries out the reaction N(tele)-phospho-L-histidyl/L-threonyl-[pyruvate, phosphate dikinase] + ADP = N(tele)-phospho-L-histidyl/O-phospho-L-threonyl-[pyruvate, phosphate dikinase] + AMP + H(+). The catalysed reaction is N(tele)-phospho-L-histidyl/O-phospho-L-threonyl-[pyruvate, phosphate dikinase] + phosphate + H(+) = N(tele)-phospho-L-histidyl/L-threonyl-[pyruvate, phosphate dikinase] + diphosphate. Functionally, bifunctional serine/threonine kinase and phosphorylase involved in the regulation of the pyruvate, phosphate dikinase (PPDK) by catalyzing its phosphorylation/dephosphorylation. The sequence is that of Putative pyruvate, phosphate dikinase regulatory protein from Lacticaseibacillus casei (strain BL23) (Lactobacillus casei).